Here is a 265-residue protein sequence, read N- to C-terminus: Transcription factor LBX1b (265 aa).

Residues 121-180 (RRKSRTAFTNHQLYELEKRFLHQKYLSPADRDQIAHQLGLTNAQVITWFQNRRAKLKRDL) constitute a DNA-binding region (homeobox).

The protein localises to the nucleus. Transcription factor required for the development of hypaxial muscles. The sequence is that of Transcription factor LBX1b from Danio rerio (Zebrafish).